Reading from the N-terminus, the 599-residue chain is Beta-(1--&gt;2)glucan export ATP-binding/permease protein NdvA (599 aa).

The ABC transmembrane type-1 domain occupies 21-311 (GWILAVANLL…VVNFINNVLM (291 aa)). The next 6 helical transmembrane spans lie at 22 to 42 (WILA…PILF), 68 to 88 (LLGA…LVAL), 146 to 166 (EHFA…YINW), 168 to 188 (LAIL…LVVH), 254 to 274 (VITR…GIYL), and 276 to 296 (QQGL…TLLI). Residues 345-579 (VEFQNVSFSY…GGAFAQLARA (235 aa)) enclose the ABC transporter domain. Residue 378-385 (GATGAGKS) coordinates ATP.

Belongs to the ABC transporter superfamily. Beta-(1--&gt;2)glucan exporter (TC 3.A.1.108.1) family. As to quaternary structure, homodimer.

The protein resides in the cell inner membrane. It carries out the reaction [(1-&gt;2)-beta-D-glucosyl](n)(in) + ATP + H2O = [(1-&gt;2)-beta-D-glucosyl](n)(out) + ADP + phosphate + H(+). Involved in beta-(1--&gt;2)glucan export. Transmembrane domains (TMD) form a pore in the inner membrane and the ATP-binding domain (NBD) is responsible for energy generation. In Rhodopseudomonas palustris (strain ATCC BAA-98 / CGA009), this protein is Beta-(1--&gt;2)glucan export ATP-binding/permease protein NdvA.